An 86-amino-acid chain; its full sequence is Putative regulatory protein Desal_2819 (86 aa).

Belongs to the RemA family.

The sequence is that of Putative regulatory protein Desal_2819 from Maridesulfovibrio salexigens (strain ATCC 14822 / DSM 2638 / NCIMB 8403 / VKM B-1763) (Desulfovibrio salexigens).